Consider the following 301-residue polypeptide: Runt-related transcription factor rnt-1 (301 aa).

The region spanning 10 to 138 (NFIEQQPAPA…TVDGPRDARI (129 aa)) is the Runt domain. 3 interaction with DNA regions span residues 40 to 44 (RSNKS), 95 to 103 (RFVGRSGRG), and 128 to 137 (VTVDGPRDAR). Chloride is bound by residues Arg-99 and Val-130. The tract at residues 237-301 (PSIFITPTSD…SSSPTIWRPF (65 aa)) is disordered. At Ser-255 the chain carries Phosphoserine. The span at 255-276 (SPRSITKSSETSINLIQETPES) shows a compositional bias: polar residues. A compositionally biased stretch (low complexity) spans 285-301 (VSITSSNSSSPTIWRPF).

As to quaternary structure, interacts with CBFbeta homolog bro-1; acts to increase the affinity and specificity of interaction of rnt-1 with DNA. Interacts with TGF-beta pathway protein sma-4. May be ubiquitinated in order to be targeted for proteasome-mediated degradation in intestinal cells. In terms of processing, may be phosphorylated by members of the p38 MAP kinase pathway. In terms of tissue distribution, expressed in the intestine.

Its subcellular location is the nucleus. Transcription factor. Binds to regulatory DNA sequences in order to modulate transcription; negatively autoregulates its own expression, perhaps dependent upon CBF beta homolog bro-1. Promotes proliferation, and prevents differentiation, of seam cells, a stem cell-like lineage, acting in concert with bro-1. Required for controlling cell proliferation in the seam cells, perhaps by repressing expression of cyclin-dependent kinase inhibitor cki-1. Inhibition of seam cell differentiation is regulated by rnt-1 and bro-1, perhaps acting upstream of pop-1, by antagonizing pop-1 repressor function. Required for asymmetrical cell divisions in the lineage derived from a posterior embryonic seam cell, the T blast cell, and for asymmetric expression of zinc finger protein tlp-1. Regulates growth and male tail development. Involved in the oxidative stress response, perhaps downstream of the p38 MAP kinase pathway, and acting as part of a negative feedback loop via a transcriptional target gene, tyrosine-protein phosphatase vhp-1. Positively modulates dopaminergic signaling in a non-cell autonomous manner. May be involved in TGF-beta signaling. In Caenorhabditis elegans, this protein is Runt-related transcription factor rnt-1.